The sequence spans 359 residues: Transaldolase (359 aa).

Catalysis depends on Lys-139, which acts as the Schiff-base intermediate with substrate.

Belongs to the transaldolase family. Type 2 subfamily.

Its subcellular location is the cytoplasm. It catalyses the reaction D-sedoheptulose 7-phosphate + D-glyceraldehyde 3-phosphate = D-erythrose 4-phosphate + beta-D-fructose 6-phosphate. The protein operates within carbohydrate degradation; pentose phosphate pathway; D-glyceraldehyde 3-phosphate and beta-D-fructose 6-phosphate from D-ribose 5-phosphate and D-xylulose 5-phosphate (non-oxidative stage): step 2/3. Functionally, transaldolase is important for the balance of metabolites in the pentose-phosphate pathway. The polypeptide is Transaldolase (Thiobacillus denitrificans (strain ATCC 25259 / T1)).